Here is a 233-residue protein sequence, read N- to C-terminus: Large ribosomal subunit protein uL1 (233 aa).

It belongs to the universal ribosomal protein uL1 family. Part of the 50S ribosomal subunit.

Functionally, binds directly to 23S rRNA. The L1 stalk is quite mobile in the ribosome, and is involved in E site tRNA release. Its function is as follows. Protein L1 is also a translational repressor protein, it controls the translation of the L11 operon by binding to its mRNA. This chain is Large ribosomal subunit protein uL1, found in Pelobacter propionicus (strain DSM 2379 / NBRC 103807 / OttBd1).